The following is a 339-amino-acid chain: MamK-like protein (339 aa).

ATP contacts are provided by residues 18–19, D74, 162–164, and 216–220; these read YS, AWT, and KEQFA.

This sequence belongs to the FtsA/MreB family. MamK subfamily. As to quaternary structure, forms cytoplasmic filament polymers. Forms filaments with MamK.

It localises to the cytoplasm. The protein localises to the cytoskeleton. It catalyses the reaction ATP + H2O = ADP + phosphate + H(+). Its function is as follows. Protein with ATPase activity which forms pole-to-pole filaments in vivo, probably with MamK. Efficient filament formation requires MamK. Probably promotes turnover of MamK filaments, by providing a monomer pool. In vivo, in the absence of its paralog MamK, forms thin filaments from pole to pole. In vitro forms straight filaments and bundles in the absence of ATP. Filament formation is triggered by KCl and MgCl(2); polymerizes more slowly and makes thinner filaments than MamK. Expression in E.coli yields a filament in the cell's longitudinal axis; the protein nucleates at one pole or the cell septum. The protein is MamK-like protein of Paramagnetospirillum magneticum (strain ATCC 700264 / AMB-1) (Magnetospirillum magneticum).